Consider the following 340-residue polypeptide: S-adenosylmethionine:tRNA ribosyltransferase-isomerase (340 aa).

It belongs to the QueA family. As to quaternary structure, monomer.

It is found in the cytoplasm. The enzyme catalyses 7-aminomethyl-7-carbaguanosine(34) in tRNA + S-adenosyl-L-methionine = epoxyqueuosine(34) in tRNA + adenine + L-methionine + 2 H(+). The protein operates within tRNA modification; tRNA-queuosine biosynthesis. Transfers and isomerizes the ribose moiety from AdoMet to the 7-aminomethyl group of 7-deazaguanine (preQ1-tRNA) to give epoxyqueuosine (oQ-tRNA). The protein is S-adenosylmethionine:tRNA ribosyltransferase-isomerase of Francisella tularensis subsp. holarctica (strain OSU18).